Consider the following 206-residue polypeptide: 2,3-bisphosphoglycerate-dependent phosphoglycerate mutase (206 aa).

Substrate-binding positions include 9–16 (RHGQSEWN), 22–23 (TG), Arg61, 88–91 (ERDY), Lys99, 115–116 (RR), and 159–160 (GN). The active-site Tele-phosphohistidine intermediate is His10. Catalysis depends on Glu88, which acts as the Proton donor/acceptor.

Belongs to the phosphoglycerate mutase family. BPG-dependent PGAM subfamily. As to quaternary structure, homodimer.

It carries out the reaction (2R)-2-phosphoglycerate = (2R)-3-phosphoglycerate. Its pathway is carbohydrate degradation; glycolysis; pyruvate from D-glyceraldehyde 3-phosphate: step 3/5. Catalyzes the interconversion of 2-phosphoglycerate and 3-phosphoglycerate. The chain is 2,3-bisphosphoglycerate-dependent phosphoglycerate mutase from Mesorhizobium japonicum (strain LMG 29417 / CECT 9101 / MAFF 303099) (Mesorhizobium loti (strain MAFF 303099)).